Consider the following 450-residue polypeptide: UDP-N-acetylmuramoylalanine--D-glutamate ligase (450 aa).

119 to 125 (GSNGKTT) serves as a coordination point for ATP.

This sequence belongs to the MurCDEF family.

The protein localises to the cytoplasm. The catalysed reaction is UDP-N-acetyl-alpha-D-muramoyl-L-alanine + D-glutamate + ATP = UDP-N-acetyl-alpha-D-muramoyl-L-alanyl-D-glutamate + ADP + phosphate + H(+). It functions in the pathway cell wall biogenesis; peptidoglycan biosynthesis. Its function is as follows. Cell wall formation. Catalyzes the addition of glutamate to the nucleotide precursor UDP-N-acetylmuramoyl-L-alanine (UMA). In Bacillus cereus (strain G9842), this protein is UDP-N-acetylmuramoylalanine--D-glutamate ligase.